We begin with the raw amino-acid sequence, 1139 residues long: Integrin alpha ina-1 (1139 aa).

The first 19 residues, 1–19 (MRECIISWTLLLCLSCVKS), serve as a signal peptide directing secretion. Residues 20–1084 (FNLDVNAPIY…PTIGDSRPIP (1065 aa)) are Extracellular-facing. The FG-GAP 1 repeat unit spans residues 21-85 (NLDVNAPIYR…CDINTFYNGG (65 aa)). 2 N-linked (GlcNAc...) asparagine glycosylation sites follow: Asn108 and Asn136. 6 FG-GAP repeats span residues 111 to 171 (RGRT…LQST), 180 to 231 (LPTT…IFDS), 242 to 302 (NGDM…SSSK), 307 to 370 (EDKF…QRKQ), 378 to 438 (HPPK…IEKF), and 448 to 510 (GNDL…MEKR). N-linked (GlcNAc...) asparagine glycosylation occurs at Asn313. Residues Asn580, Asn788, Asn851, and Asn1026 are each glycosylated (N-linked (GlcNAc...) asparagine). A helical membrane pass occupies residues 1085–1106 (WWIYVIAAVIGVLILSLIIICL). Over 1107–1139 (SKCGFFKRNRLDQPSLYTAQLKHEREEWADTGL) the chain is Cytoplasmic.

The protein belongs to the integrin alpha chain family. In terms of assembly, heterodimer of an alpha and a beta subunit. Alpha ina-1 associates with beta pat-3. Interacts (via cytoplasmic domain) with src-1 (when phosphorylated at 'Tyr-416').

Its subcellular location is the membrane. It localises to the cell projection. The protein localises to the phagocytic cup. It is found in the cytoplasmic vesicle. The protein resides in the phagosome membrane. Plays a role in cell migration, axon fasciculation, and morphogenesis. During gonad morphogenesis, involved in distal tip cell (DTC)-mediated guidance of gonad elongation, in maintaining their sharp tapering morphology and in their migration. Involved in the anterior-posterior positioning of QR neuroblast descendants by regulating the migratory speed of QR.p. Probably by acting as a receptor for apoptotic cells, plays a role in the clearance of apoptotic cells during mid-embryogenesis. This Caenorhabditis elegans protein is Integrin alpha ina-1 (ina-1).